We begin with the raw amino-acid sequence, 241 residues long: Small ribosomal subunit protein uS3 (241 aa).

Residues Ile39–Gln109 form the KH type-2 domain. Residues Glu214–Glu241 are disordered. Residues Gln232–Glu241 show a composition bias toward basic and acidic residues.

This sequence belongs to the universal ribosomal protein uS3 family. As to quaternary structure, part of the 30S ribosomal subunit. Forms a tight complex with proteins S10 and S14.

Its function is as follows. Binds the lower part of the 30S subunit head. Binds mRNA in the 70S ribosome, positioning it for translation. This chain is Small ribosomal subunit protein uS3, found in Rippkaea orientalis (strain PCC 8801 / RF-1) (Cyanothece sp. (strain PCC 8801)).